Consider the following 141-residue polypeptide: MKKLSLSLMLNVSLALMLALSLIYPQSVAVNFVAAWAILATVICVVAGGVGVYATEYVLERYGRELPPESLAVKIVTSLFLQPVPWRRRAAALVVVVATFISLVAAGWIFTALIYLVVSLFFRLIRKACRQRLEGREPCQG.

3 helical membrane-spanning segments follow: residues 4 to 24, 32 to 52, and 94 to 114; these read LSLSLMLNVSLALMLALSLIY, FVAAWAILATVICVVAGGVGV, and VVVVATFISLVAAGWIFTALI.

As to quaternary structure, interacts with holin; this interaction this interaction blocks the holin homomultimerization and delays the host cell lysis.

It localises to the host cell inner membrane. Its function is as follows. Involved in lysis inhibition. Interacts with and inhibits the holin thereby delaying the host cell lysis timing. This chain is Putative antiholin (lysA), found in Enterobacteriaceae (Bacteriophage P2).